The chain runs to 430 residues: Tol-Pal system protein TolB (430 aa).

The first 21 residues, 1 to 21, serve as a signal peptide directing secretion; the sequence is MKQALRVAFGFLILWASVLHA.

The protein belongs to the TolB family. The Tol-Pal system is composed of five core proteins: the inner membrane proteins TolA, TolQ and TolR, the periplasmic protein TolB and the outer membrane protein Pal. They form a network linking the inner and outer membranes and the peptidoglycan layer.

The protein resides in the periplasm. Its function is as follows. Part of the Tol-Pal system, which plays a role in outer membrane invagination during cell division and is important for maintaining outer membrane integrity. TolB occupies a key intermediary position in the Tol-Pal system because it communicates directly with both membrane-embedded components, Pal in the outer membrane and TolA in the inner membrane. In Shigella boydii serotype 18 (strain CDC 3083-94 / BS512), this protein is Tol-Pal system protein TolB.